A 477-amino-acid chain; its full sequence is Aspartyl/glutamyl-tRNA(Asn/Gln) amidotransferase subunit B (477 aa).

The protein belongs to the GatB/GatE family. GatB subfamily. As to quaternary structure, heterotrimer of A, B and C subunits.

The catalysed reaction is L-glutamyl-tRNA(Gln) + L-glutamine + ATP + H2O = L-glutaminyl-tRNA(Gln) + L-glutamate + ADP + phosphate + H(+). It carries out the reaction L-aspartyl-tRNA(Asn) + L-glutamine + ATP + H2O = L-asparaginyl-tRNA(Asn) + L-glutamate + ADP + phosphate + 2 H(+). In terms of biological role, allows the formation of correctly charged Asn-tRNA(Asn) or Gln-tRNA(Gln) through the transamidation of misacylated Asp-tRNA(Asn) or Glu-tRNA(Gln) in organisms which lack either or both of asparaginyl-tRNA or glutaminyl-tRNA synthetases. The reaction takes place in the presence of glutamine and ATP through an activated phospho-Asp-tRNA(Asn) or phospho-Glu-tRNA(Gln). This chain is Aspartyl/glutamyl-tRNA(Asn/Gln) amidotransferase subunit B, found in Nitrosococcus oceani (strain ATCC 19707 / BCRC 17464 / JCM 30415 / NCIMB 11848 / C-107).